A 296-amino-acid chain; its full sequence is Diguanylate cyclase DgcZ (296 aa).

Zn(2+)-binding residues include His-22, Cys-52, His-79, and His-83. In terms of domain architecture, GGDEF spans 157-289; sequence LNLYLMLLDI…GRNRCMFIDE (133 aa). Residues Asp-165 and Ile-166 each contribute to the Mg(2+) site. Residues Asn-173, His-178, Asp-182, and 195-200 contribute to the substrate site; that span reads WTRDYE. Glu-208 lines the Mg(2+) pocket. Glu-208 serves as the catalytic Proton acceptor. Residues Lys-215, Arg-224, and Arg-228 each coordinate substrate.

In terms of assembly, homodimer. Mg(2+) serves as cofactor.

The enzyme catalyses 2 GTP = 3',3'-c-di-GMP + 2 diphosphate. It participates in purine metabolism; 3',5'-cyclic di-GMP biosynthesis. Its activity is regulated as follows. Allosterically regulated by zinc, which seems to regulate the activity of the catalytic GGDEF domains by impeding their mobility and thus preventing productive encounter of the two GTP substrates. Subject to product inhibition by c-di-GMP at a KI of 44 uM. Functionally, catalyzes the synthesis of cyclic-di-GMP (c-di-GMP) via the condensation of 2 GTP molecules. May act as a zinc sensor that controls, via c-di-GMP, post-translational events. Overexpression leads to a strong repression of swimming; swimming returnes to normal when residues 206-207 are both mutated to Ala. Overexpression also leads to a reduction in flagellar abundance and a 20-fold increase in c-di-GMP levels in vivo. Required for aminoglycoside-mediated induction of biofilm formation, it also plays a lesser role in biofilm production in response to other classes of translation inhibitors. The c-di-GMP produced by this enzyme up-regulates poly-GlcNAc production as well as the biofilm synthesis protein PgaD, although c-di-GMP is probably not the main inducing principle. C-di-GMP is a second messenger which controls cell surface-associated traits in bacteria. The chain is Diguanylate cyclase DgcZ from Escherichia coli (strain K12).